Here is a 496-residue protein sequence, read N- to C-terminus: Beta-N-acetylhexosaminidase (496 aa).

Glutamate 298 (proton donor) is an active-site residue.

This sequence belongs to the glycosyl hydrolase 20 family.

It catalyses the reaction Hydrolysis of terminal non-reducing N-acetyl-D-hexosamine residues in N-acetyl-beta-D-hexosaminides.. It participates in glycan degradation; chitin degradation. Its function is as follows. Catalyzes the cleavage of beta-N-acetylglucosaminides and beta-N-acetylgalactosaminides. Also catalyzes the hydrolysis of N-acetylchitooligomers. May be involved in chitin degradation. It is not able to cleave beta-glucosides. This is Beta-N-acetylhexosaminidase (hex20) from Cellulomonas fimi.